The sequence spans 415 residues: MQDLISQVEDLAGIEIDHTTSMVMIFGIIFLTAVVVHIILHWVVLRTFEKRAIASSRLWLQIITQNKLFHRLAFTLQGIIVNIQAVFWLQKGTEAADILTTCAQLWIMMYALLSVFSLLDVILNLAQKFPAASQLPLKGIFQGIKLIGAILVGILMISLLIGQSPAILISGLGAMAAVLMLVFKDPILGLVAGIQLSANDMLKLGDWLEMPKYGADGAVIDIGLTTVKVRNWDNTITTIPTWSLVSDSFKNWSGMSASGGRRIKRSISIDVTSIRFLDEDEMQRLNKAHLLKPYLTSRHQEINEWNRQQGSTESVLNLRRMTNIGTFRAYLNEYLRNHPRIRKDMTLMVRQLAPGDNGLPLEIYAFTNTVVWLEYESIQADIFDHIFAIVEEFGLRLHQSPTGNDIRSLAGAFKQ.

Over 1–24 (MQDLISQVEDLAGIEIDHTTSMVM) the chain is Periplasmic. Residues 25–45 (IFGIIFLTAVVVHIILHWVVL) form a helical membrane-spanning segment. At 46–67 (RTFEKRAIASSRLWLQIITQNK) the chain is on the cytoplasmic side. Residues 68–88 (LFHRLAFTLQGIIVNIQAVFW) form a helical membrane-spanning segment. Over 89-104 (LQKGTEAADILTTCAQ) the chain is Periplasmic. A helical membrane pass occupies residues 105–125 (LWIMMYALLSVFSLLDVILNL). At 126-148 (AQKFPAASQLPLKGIFQGIKLIG) the chain is on the cytoplasmic side. The helical transmembrane segment at 149–169 (AILVGILMISLLIGQSPAILI) threads the bilayer. At 170–173 (SGLG) the chain is on the periplasmic side. Residues 174-194 (AMAAVLMLVFKDPILGLVAGI) form a helical membrane-spanning segment. At 195 to 415 (QLSANDMLKL…IRSLAGAFKQ (221 aa)) the chain is on the cytoplasmic side.

This sequence belongs to the MscS (TC 1.A.23) family. In terms of assembly, homoheptamer.

The protein resides in the cell inner membrane. Functions as a component of a mechanosensing system that transmits signals triggered by external osmotic changes to intracellular factors. This is Mechanosensing system component YbdG (ybdG) from Shigella flexneri.